We begin with the raw amino-acid sequence, 1008 residues long: SKI family transcriptional corepressor 2 (1008 aa).

Disordered regions lie at residues 280-315 and 514-927; these read HLLGAPPPPPPPPPLAELAGAPHAHHKRPRFDDDDD and EPGG…KKDV. Pro residues-rich tracts occupy residues 284–294 and 525–534; these read APPPPPPPPPL and APPPGQPPPV. 2 stretches are compositionally biased toward low complexity: residues 535–544 and 578–595; these read VANGPGSGPP and GVTSGTGSASSGAGSVGT. The segment covering 626–635 has biased composition (basic and acidic residues); it reads GGKDDAESLA. The segment covering 649-666 has biased composition (basic residues); it reads PAHHHHHHHHPHHHHHHP. The segment covering 691–703 has biased composition (pro residues); it reads APPPPPPPPPLAP. Acidic residues-rich tracts occupy residues 724–739 and 748–766; these read DSSEDEEDEEEEQEVD and GEEEEDGRDPEDEEEEDEE. A compositionally biased stretch (basic and acidic residues) spans 787-797; that stretch reads LSEKGSGRDRT. Residues 842–855 show a composition bias toward low complexity; the sequence is SSSGGSRPGSPVHH. Basic and acidic residues-rich tracts occupy residues 856–872, 880–890, and 905–915; these read PSLEEEPSYKDNQKPKE, TKDDNFSDKNK, and FWRERSGEHTQ.

It belongs to the SKI family. In terms of assembly, interacts with SMAD2 and SMAD3. As to expression, expression is restricted to adult and embryonic central nervous system. Expressed at high levels in the developing cerebellum, ventral metencephalon and myelencephalon at 12.5 dpc (at protein level). In the adult cerebellum, expressed specifically in Purkinje cells.

It localises to the nucleus. It is found in the cytoplasm. Its function is as follows. Acts as a TGF-beta antagonist in the nervous system. Exhibits transcriptional repressor activity. This chain is SKI family transcriptional corepressor 2, found in Mus musculus (Mouse).